Reading from the N-terminus, the 257-residue chain is Hydroxyacylglutathione hydrolase (257 aa).

Residues His-54, His-56, Asp-58, His-59, His-113, Asp-137, and His-175 each coordinate Zn(2+).

The protein belongs to the metallo-beta-lactamase superfamily. Glyoxalase II family. In terms of assembly, monomer. It depends on Zn(2+) as a cofactor.

It catalyses the reaction an S-(2-hydroxyacyl)glutathione + H2O = a 2-hydroxy carboxylate + glutathione + H(+). Its pathway is secondary metabolite metabolism; methylglyoxal degradation; (R)-lactate from methylglyoxal: step 2/2. In terms of biological role, thiolesterase that catalyzes the hydrolysis of S-D-lactoyl-glutathione to form glutathione and D-lactic acid. The chain is Hydroxyacylglutathione hydrolase from Crocosphaera subtropica (strain ATCC 51142 / BH68) (Cyanothece sp. (strain ATCC 51142)).